Here is a 406-residue protein sequence, read N- to C-terminus: Argininosuccinate synthase (406 aa).

ATP is bound by residues 14–22 (AYSGGLDTS) and Ala-41. Tyr-92 and Ser-97 together coordinate L-citrulline. An ATP-binding site is contributed by Gly-122. Residues Thr-124, Asn-128, and Asp-129 each contribute to the L-aspartate site. L-citrulline is bound at residue Asn-128. Residues Arg-132, Ser-181, Ser-190, Glu-266, and Tyr-278 each contribute to the L-citrulline site.

Belongs to the argininosuccinate synthase family. Type 1 subfamily. In terms of assembly, homotetramer.

It localises to the cytoplasm. The catalysed reaction is L-citrulline + L-aspartate + ATP = 2-(N(omega)-L-arginino)succinate + AMP + diphosphate + H(+). It participates in amino-acid biosynthesis; L-arginine biosynthesis; L-arginine from L-ornithine and carbamoyl phosphate: step 2/3. The chain is Argininosuccinate synthase from Geobacter sulfurreducens (strain ATCC 51573 / DSM 12127 / PCA).